The primary structure comprises 609 residues: MLSRKRKHGSPDAESNPSKKQITSLRSSPRRTTRQKENIPISLNSPQKIPSTPKKTQRAFLLESPPKRVSPRKAVLGAGTFYSKQKPLYLTPLERKVLKEAKSPPSVTNKEPSRPPLTAANQVVKPAKKVQKKPRASAPQSNLKGYFTAKPKATKSSSDKQTDQVLKSTMAPISFSSMKSKGKPKLVVGAAFFNTGKKPTSMYKKSAQNTKPKPTYEKPSIRKPVREKELVTAPGQRSPVRRAVFLKKQPEVEVSHDKRESTQAPMSPQVLADVHGITKELRVVLRRSVSPETGSQDAPSEADSVFDVSDLLLPDHDSSHDEEESSVYPIFGTKRPQKKGKLSPPLNSSTPSALTATPALKAKERSMLRREMKKQTDNQLIIDAGQKQFGATTCASCGMLYSTDSPEDNFQHTQFHQRFLDTIKFVGWKKERVVAEFWDGKIILVLPDDPKYATRKAEDVRRIADSELGFQQITLSSPSSAKTYLFINTDRMVVGCLVAENIRQAYRVLEQQEKQKDMSKEDFMEHHRTWCCSTVPEKALCGVSRIWVFSLMRRKSVATRLLDTARNTFMYGSHLTKEEIAFSDPTPQGKLFATKYCQTPTFLVYNFIS.

Disordered regions lie at residues 1 to 71 (MLSR…RVSP), 100 to 165 (EAKS…TDQV), 197 to 241 (KKPT…SPVR), and 314 to 357 (PDHD…LTAT). 2 stretches are compositionally biased toward polar residues: residues 13 to 22 (AESNPSKKQI) and 41 to 54 (ISLN…STPK). Over residues 126–135 (PAKKVQKKPR) the composition is skewed to basic residues. A compositionally biased stretch (basic and acidic residues) spans 214–230 (PTYEKPSIRKPVREKEL). The segment covering 345 to 355 (PLNSSTPSALT) has biased composition (polar residues). The CCHH-type zinc finger occupies 392–416 (TTCASCGMLYSTDSPEDNFQHTQFH).

Belongs to the acetyltransferase family. ECO subfamily.

The protein resides in the nucleus. It localises to the chromosome. The enzyme catalyses L-lysyl-[protein] + acetyl-CoA = N(6)-acetyl-L-lysyl-[protein] + CoA + H(+). Its function is as follows. Acetyltransferase required for the establishment of sister chromatid cohesion. Couples the processes of cohesion and DNA replication to ensure that only sister chromatids become paired together. Essential for early development. This Danio rerio (Zebrafish) protein is N-acetyltransferase ESCO2 (esco2).